Here is a 470-residue protein sequence, read N- to C-terminus: Uronate isomerase (470 aa).

It belongs to the metallo-dependent hydrolases superfamily. Uronate isomerase family.

The catalysed reaction is D-glucuronate = D-fructuronate. It catalyses the reaction aldehydo-D-galacturonate = keto-D-tagaturonate. Its pathway is carbohydrate metabolism; pentose and glucuronate interconversion. The sequence is that of Uronate isomerase from Salmonella typhi.